The primary structure comprises 262 residues: Indole-3-glycerol phosphate synthase (262 aa).

Belongs to the TrpC family.

The enzyme catalyses 1-(2-carboxyphenylamino)-1-deoxy-D-ribulose 5-phosphate + H(+) = (1S,2R)-1-C-(indol-3-yl)glycerol 3-phosphate + CO2 + H2O. The protein operates within amino-acid biosynthesis; L-tryptophan biosynthesis; L-tryptophan from chorismate: step 4/5. The chain is Indole-3-glycerol phosphate synthase from Clostridium kluyveri (strain NBRC 12016).